The primary structure comprises 250 residues: Ureidoacrylate amidohydrolase RutB (250 aa).

D44 serves as the catalytic Proton acceptor. The active site involves K153. The active-site Nucleophile is the C186.

Belongs to the isochorismatase family. RutB subfamily.

It catalyses the reaction (Z)-3-ureidoacrylate + H2O + H(+) = (Z)-3-aminoacrylate + NH4(+) + CO2. The enzyme catalyses (Z)-3-ureidoacrylate + H2O = (Z)-3-aminoacrylate + carbamate + H(+). It carries out the reaction (Z)-2-methylureidoacrylate + H2O + H(+) = (Z)-2-methylaminoacrylate + NH4(+) + CO2. In terms of biological role, hydrolyzes ureidoacrylate to form aminoacrylate and carbamate. The carbamate hydrolyzes spontaneously, thereby releasing one of the nitrogen atoms of the pyrimidine ring as ammonia and one of its carbon atoms as CO2. In Pantoea ananatis (strain LMG 20103), this protein is Ureidoacrylate amidohydrolase RutB.